The following is a 202-amino-acid chain: Probable GTP-binding protein EngB (202 aa).

The region spanning 26–200 (VSKEIAFTGS…KAQLDSWFSI (175 aa)) is the EngB-type G domain. Residues 34 to 41 (GSSNVGKS), 61 to 65 (GSTKT), 79 to 82 (DLPG), 146 to 149 (NKAD), and 179 to 181 (FSS) contribute to the GTP site. Residues serine 41 and threonine 63 each contribute to the Mg(2+) site.

This sequence belongs to the TRAFAC class TrmE-Era-EngA-EngB-Septin-like GTPase superfamily. EngB GTPase family. The cofactor is Mg(2+).

Functionally, necessary for normal cell division and for the maintenance of normal septation. This chain is Probable GTP-binding protein EngB, found in Baumannia cicadellinicola subsp. Homalodisca coagulata.